A 721-amino-acid polypeptide reads, in one-letter code: Fatty acid oxidation complex subunit alpha (721 aa).

Residues 1-190 (MIYEGKAITV…KVGAVDAVVA (190 aa)) form an enoyl-CoA hydratase/isomerase region. Residue aspartate 297 participates in substrate binding. Positions 312-721 (KDVKQAAVLG…SFFGQASSEE (410 aa)) are 3-hydroxyacyl-CoA dehydrogenase. NAD(+) contacts are provided by residues methionine 325, aspartate 344, 401–403 (VVE), lysine 408, and serine 430. The For 3-hydroxyacyl-CoA dehydrogenase activity role is filled by histidine 451. An NAD(+)-binding site is contributed by asparagine 454. Substrate is bound by residues asparagine 501 and tyrosine 660.

In the N-terminal section; belongs to the enoyl-CoA hydratase/isomerase family. It in the C-terminal section; belongs to the 3-hydroxyacyl-CoA dehydrogenase family. Heterotetramer of two alpha chains (FadB) and two beta chains (FadA).

The enzyme catalyses a (3S)-3-hydroxyacyl-CoA + NAD(+) = a 3-oxoacyl-CoA + NADH + H(+). It carries out the reaction a (3S)-3-hydroxyacyl-CoA = a (2E)-enoyl-CoA + H2O. It catalyses the reaction a 4-saturated-(3S)-3-hydroxyacyl-CoA = a (3E)-enoyl-CoA + H2O. The catalysed reaction is (3S)-3-hydroxybutanoyl-CoA = (3R)-3-hydroxybutanoyl-CoA. The enzyme catalyses a (3Z)-enoyl-CoA = a 4-saturated (2E)-enoyl-CoA. It carries out the reaction a (3E)-enoyl-CoA = a 4-saturated (2E)-enoyl-CoA. It functions in the pathway lipid metabolism; fatty acid beta-oxidation. Its function is as follows. Involved in the aerobic and anaerobic degradation of long-chain fatty acids via beta-oxidation cycle. Catalyzes the formation of 3-oxoacyl-CoA from enoyl-CoA via L-3-hydroxyacyl-CoA. It can also use D-3-hydroxyacyl-CoA and cis-3-enoyl-CoA as substrate. This Pseudomonas syringae pv. syringae (strain B728a) protein is Fatty acid oxidation complex subunit alpha.